Reading from the N-terminus, the 309-residue chain is MPIRVPDELPAVNFLREENVFVMTTSRASGQEIRPLKVLILNLMPKKIETENQFLRLLSNSPLQVDIQLLRIDSRESRNTPAEHLNNFYCNFEDIQEQNFDGLIVTGAPLGLVEFNDVAYWPQIKQVLEWSKDHVTSTLFVCWAVQAALNILYGIPKQTRTDKLSGVYEHHILHPHALLTRGFDDSFLAPHSRYADFPAALIRDYTDLEILAETEEGDAYLFASKDKRIAFVTGHPEYDAQTLAQEYFRDVEAGLDPEVPYNYFPHNDPQNTPRASWRSHGNLLFTNWLNYYVYQITPYDLRHMNPTLD.

C142 (acyl-thioester intermediate) is an active-site residue. The substrate site is built by K163 and S192. The active-site Proton acceptor is the H235. Residue E237 is part of the active site. R249 provides a ligand contact to substrate.

This sequence belongs to the MetA family. As to quaternary structure, homodimer.

The protein localises to the cytoplasm. It carries out the reaction L-homoserine + succinyl-CoA = O-succinyl-L-homoserine + CoA. It participates in amino-acid biosynthesis; L-methionine biosynthesis via de novo pathway; O-succinyl-L-homoserine from L-homoserine: step 1/1. Its function is as follows. Transfers a succinyl group from succinyl-CoA to L-homoserine, forming succinyl-L-homoserine. In Escherichia coli O17:K52:H18 (strain UMN026 / ExPEC), this protein is Homoserine O-succinyltransferase.